Consider the following 347-residue polypeptide: Endophilin-A3 (347 aa).

Positions 1–21 (MSVAGLKKQFHKASQLFSEKI) are membrane-binding amphipathic helix. In terms of domain architecture, BAR spans 18 to 249 (SEKISGAEGT…LELRISLASK (232 aa)). The tract at residues 60-87 (PNPAYRAKLGMLNTVSKLRGQVKATGYP) is required for dimerization upon membrane association. A coiled-coil region spans residues 180-201 (EEEIRQAVEKFEESKELAERSM). The tract at residues 218–254 (FVEAALDYHRQSTEILQELQSKLELRISLASKVPKRE) is interaction with ARC. A disordered region spans residues 255–288 (FMPKPVNMSSTDANGVGPSSSSKTPGTDTPADQP). The span at 261–281 (NMSSTDANGVGPSSSSKTPGT) shows a compositional bias: polar residues. The 60-residue stretch at 285–344 (ADQPCCRGLYDFEPENEGELGFKEGDIITLTNQIDENWYEGMLRGESGFFPINYVEVIVP) folds into the SH3 domain.

Belongs to the endophilin family. Interacts with ARC, DNM1, SGIP1, SYNJ1 and DYDC1. Interacts with FASLG. Interacts with ATXN2. Interacts with BIN2.

The protein localises to the cytoplasm. It is found in the early endosome membrane. Implicated in endocytosis. May recruit other proteins to membranes with high curvature. The sequence is that of Endophilin-A3 (Sh3gl3) from Mus musculus (Mouse).